A 434-amino-acid chain; its full sequence is Maltoporin (434 aa).

Positions 1–25 are cleaved as a signal peptide; that stretch reads MMTTLRKLPLALAIAAGVLTTQAMA.

This sequence belongs to the porin LamB (TC 1.B.3) family. Homotrimer formed of three 18-stranded antiparallel beta-barrels, containing three independent channels.

The protein resides in the cell outer membrane. It carries out the reaction beta-maltose(in) = beta-maltose(out). Functionally, involved in the transport of maltose and maltodextrins. The protein is Maltoporin of Serratia proteamaculans (strain 568).